A 359-amino-acid chain; its full sequence is Peptide chain release factor 1 (359 aa).

The residue at position 235 (Gln235) is an N5-methylglutamine. A disordered region spans residues 282–306; sequence RQRADSERSADRKSQVGSGDRSERI.

The protein belongs to the prokaryotic/mitochondrial release factor family. In terms of processing, methylated by PrmC. Methylation increases the termination efficiency of RF1.

The protein localises to the cytoplasm. Peptide chain release factor 1 directs the termination of translation in response to the peptide chain termination codons UAG and UAA. The chain is Peptide chain release factor 1 from Rhizobium rhizogenes (strain K84 / ATCC BAA-868) (Agrobacterium radiobacter).